Here is a 180-residue protein sequence, read N- to C-terminus: HTH-type transcriptional regulator EcpR (180 aa).

Positions 122-180 (KDIKKDKITDREMKIIRMTAQGMQPKSIARIENCSVKTVYTHRRNAEAKLYSKIYKLVQ) constitute an HTH luxR-type domain. A DNA-binding region (H-T-H motif) is located at residues 146–165 (PKSIARIENCSVKTVYTHRR).

The protein belongs to the EcpR/MatA family.

It is found in the cytoplasm. In terms of biological role, part of the ecpRABCDE operon, which encodes the E.coli common pilus (ECP). ECP plays a dual role in early-stage biofilm development and host cell recognition. Positively regulates the expression of the ecp operon. The polypeptide is HTH-type transcriptional regulator EcpR (ecpR) (Klebsiella pneumoniae (strain 342)).